A 476-amino-acid chain; its full sequence is 3-isopropylmalate dehydratase large subunit (476 aa).

3 residues coordinate [4Fe-4S] cluster: cysteine 353, cysteine 413, and cysteine 416.

This sequence belongs to the aconitase/IPM isomerase family. LeuC type 1 subfamily. In terms of assembly, heterodimer of LeuC and LeuD. It depends on [4Fe-4S] cluster as a cofactor.

It carries out the reaction (2R,3S)-3-isopropylmalate = (2S)-2-isopropylmalate. It participates in amino-acid biosynthesis; L-leucine biosynthesis; L-leucine from 3-methyl-2-oxobutanoate: step 2/4. Catalyzes the isomerization between 2-isopropylmalate and 3-isopropylmalate, via the formation of 2-isopropylmaleate. The polypeptide is 3-isopropylmalate dehydratase large subunit (Yersinia pseudotuberculosis serotype IB (strain PB1/+)).